The sequence spans 354 residues: N-acylethanolamine-hydrolyzing acid amidase (354 aa).

Residues 1–22 (MRSPGIVLLLLLLLLLPPGAAP) form the signal peptide. Asn-35 and Asn-104 each carry an N-linked (GlcNAc...) asparagine glycan. Cys-123 (nucleophile) is an active-site residue. 3 N-linked (GlcNAc...) asparagine glycosylation sites follow: Asn-306, Asn-312, and Asn-352.

This sequence belongs to the acid ceramidase family. Heterodimer of an alpha and a beta subunit, produced by autocatalytic cleavage. Post-translationally, N-glycosylated. Tunicamycin treatment causes a reduction in specific activity against N-palmitoylethanolamine. In terms of processing, autoproteolytic cleavage at pH 4.5 gives rise to the alpha and beta subunit. Cleavage gives rise to a conformation change that activates the enzyme. The same catalytic Cys residue mediates the autoproteolytic cleavage and subsequent hydrolysis of lipid substrates.

Its subcellular location is the lysosome. It is found in the membrane. The catalysed reaction is N-hexadecanoylethanolamine + H2O = ethanolamine + hexadecanoate. The enzyme catalyses an N-(long-chain fatty acyl)ethanolamine + H2O = a long-chain fatty acid + ethanolamine. It carries out the reaction N-dodecanoylethanolamine + H2O = dodecanoate + ethanolamine. It catalyses the reaction N-tetradecanoylethanolamine + H2O = tetradecanoate + ethanolamine. The catalysed reaction is an N-acylsphing-4-enine + H2O = sphing-4-enine + a fatty acid. The enzyme catalyses N-hexadecanoylsphing-4-enine + H2O = sphing-4-enine + hexadecanoate. It carries out the reaction N-dodecanoylsphing-4-enine + H2O = dodecanoate + sphing-4-enine. The protein operates within lipid metabolism; fatty acid metabolism. Its function is as follows. Degrades bioactive fatty acid amides to their corresponding acids, with the following preference: N-palmitoylethanolamine &gt; N-myristoylethanolamine &gt; N-stearoylethanolamine &gt; N-oleoylethanolamine &gt; N-linoleoylethanolamine &gt; N-arachidonoylethanolamine. The polypeptide is N-acylethanolamine-hydrolyzing acid amidase (Cavia porcellus (Guinea pig)).